Reading from the N-terminus, the 268-residue chain is Fibroblast growth factor 5 (268 aa).

The N-terminal stretch at 1–20 (MSLSFLLLLFFSHLILSAWA) is a signal peptide. The interval 26–81 (LAPKGQPGPAATDRNPRGSSSRQSSSSAMSSSSASSSPAASLGSQGSGLEQSSFQW) is disordered. Over residues 43–80 (GSSSRQSSSSAMSSSSASSSPAASLGSQGSGLEQSSFQ) the composition is skewed to low complexity. A glycan (N-linked (GlcNAc...) asparagine) is linked at Asn-110. Residues 233-255 (VPEKKKPPSPIKPKIPLSAPRKN) form a disordered region.

Belongs to the heparin-binding growth factors family. As to quaternary structure, interacts with FGFR1 and FGFR2. Affinity between fibroblast growth factors (FGFs) and their receptors is increased by heparan sulfate glycosaminoglycans that function as coreceptors. Expressed in neonatal brain.

It localises to the secreted. Plays an important role in the regulation of cell proliferation and cell differentiation. Required for normal regulation of the hair growth cycle. Functions as an inhibitor of hair elongation by promoting progression from anagen, the growth phase of the hair follicle, into catagen the apoptosis-induced regression phase. This chain is Fibroblast growth factor 5 (FGF5), found in Homo sapiens (Human).